We begin with the raw amino-acid sequence, 85 residues long: ATP synthase subunit c (85 aa).

2 helical membrane passes run 10–30 and 53–73; these read IAVA…FGLL and FIVA…ALFF.

The protein belongs to the ATPase C chain family. F-type ATPases have 2 components, F(1) - the catalytic core - and F(0) - the membrane proton channel. F(1) has five subunits: alpha(3), beta(3), gamma(1), delta(1), epsilon(1). F(0) has three main subunits: a(1), b(2) and c(10-14). The alpha and beta chains form an alternating ring which encloses part of the gamma chain. F(1) is attached to F(0) by a central stalk formed by the gamma and epsilon chains, while a peripheral stalk is formed by the delta and b chains.

The protein resides in the cell inner membrane. F(1)F(0) ATP synthase produces ATP from ADP in the presence of a proton or sodium gradient. F-type ATPases consist of two structural domains, F(1) containing the extramembraneous catalytic core and F(0) containing the membrane proton channel, linked together by a central stalk and a peripheral stalk. During catalysis, ATP synthesis in the catalytic domain of F(1) is coupled via a rotary mechanism of the central stalk subunits to proton translocation. In terms of biological role, key component of the F(0) channel; it plays a direct role in translocation across the membrane. A homomeric c-ring of between 10-14 subunits forms the central stalk rotor element with the F(1) delta and epsilon subunits. This Pseudomonas syringae pv. syringae (strain B728a) protein is ATP synthase subunit c.